A 103-amino-acid chain; its full sequence is Large ribosomal subunit protein bL21 (103 aa).

This sequence belongs to the bacterial ribosomal protein bL21 family. As to quaternary structure, part of the 50S ribosomal subunit. Contacts protein L20.

Functionally, this protein binds to 23S rRNA in the presence of protein L20. The polypeptide is Large ribosomal subunit protein bL21 (Thermobifida fusca (strain YX)).